A 456-amino-acid polypeptide reads, in one-letter code: Outer membrane protein assembly factor BamB (456 aa).

The signal sequence occupies residues 1–19; sequence MKKLLFITAPLLLSVLTAS. The N-palmitoyl cysteine moiety is linked to residue Cys-20. Residue Cys-20 is the site of S-diacylglycerol cysteine attachment.

It belongs to the BamB family. As to quaternary structure, part of the Bam complex.

The protein resides in the cell outer membrane. Part of the outer membrane protein assembly complex, which is involved in assembly and insertion of beta-barrel proteins into the outer membrane. This chain is Outer membrane protein assembly factor BamB, found in Francisella tularensis subsp. tularensis (strain SCHU S4 / Schu 4).